Here is a 179-residue protein sequence, read N- to C-terminus: Acireductone dioxygenase (179 aa).

Residues H88, H90, E94, and H133 each contribute to the Fe(2+) site. Ni(2+)-binding residues include H88, H90, E94, and H133.

Belongs to the acireductone dioxygenase (ARD) family. In terms of assembly, monomer. Interacts with MMP14. Requires Fe(2+) as cofactor. Ni(2+) is required as a cofactor.

Its subcellular location is the cytoplasm. The protein resides in the nucleus. The protein localises to the cell membrane. The enzyme catalyses 1,2-dihydroxy-5-(methylsulfanyl)pent-1-en-3-one + O2 = 4-methylsulfanyl-2-oxobutanoate + formate + 2 H(+). The catalysed reaction is 1,2-dihydroxy-5-(methylsulfanyl)pent-1-en-3-one + O2 = 3-(methylsulfanyl)propanoate + CO + formate + 2 H(+). It participates in amino-acid biosynthesis; L-methionine biosynthesis via salvage pathway; L-methionine from S-methyl-5-thio-alpha-D-ribose 1-phosphate: step 5/6. In terms of biological role, catalyzes 2 different reactions between oxygen and the acireductone 1,2-dihydroxy-3-keto-5-methylthiopentene (DHK-MTPene) depending upon the metal bound in the active site. Fe-containing acireductone dioxygenase (Fe-ARD) produces formate and 2-keto-4-methylthiobutyrate (KMTB), the alpha-ketoacid precursor of methionine in the methionine recycle pathway. Ni-containing acireductone dioxygenase (Ni-ARD) produces methylthiopropionate, carbon monoxide and formate, and does not lie on the methionine recycle pathway. Also down-regulates cell migration mediated by MMP14. This Macaca mulatta (Rhesus macaque) protein is Acireductone dioxygenase.